We begin with the raw amino-acid sequence, 198 residues long: Probable nicotinate-nucleotide adenylyltransferase (198 aa).

This sequence belongs to the NadD family.

It catalyses the reaction nicotinate beta-D-ribonucleotide + ATP + H(+) = deamido-NAD(+) + diphosphate. The protein operates within cofactor biosynthesis; NAD(+) biosynthesis; deamido-NAD(+) from nicotinate D-ribonucleotide: step 1/1. Catalyzes the reversible adenylation of nicotinate mononucleotide (NaMN) to nicotinic acid adenine dinucleotide (NaAD). This is Probable nicotinate-nucleotide adenylyltransferase from Chlorobium phaeobacteroides (strain BS1).